The sequence spans 347 residues: NADH-ubiquinone oxidoreductase chain 2 (347 aa).

10 helical membrane-spanning segments follow: residues 1 to 21 (MNPL…LIVM), 25 to 45 (HWFM…PLLT), 67 to 87 (SMLL…WSIM), 111 to 131 (FHFW…LILL), 144 to 164 (MIMP…SIAI), 178 to 198 (IMAY…AYNP), 201 to 221 (TLLN…LLMI), 237 to 257 (LPLI…LPPL), 274 to 294 (SSII…YFYT), and 326 to 346 (LPLM…MPIL).

The protein belongs to the complex I subunit 2 family. As to quaternary structure, core subunit of respiratory chain NADH dehydrogenase (Complex I) which is composed of 45 different subunits. Interacts with TMEM242.

The protein resides in the mitochondrion inner membrane. It carries out the reaction a ubiquinone + NADH + 5 H(+)(in) = a ubiquinol + NAD(+) + 4 H(+)(out). Functionally, core subunit of the mitochondrial membrane respiratory chain NADH dehydrogenase (Complex I) which catalyzes electron transfer from NADH through the respiratory chain, using ubiquinone as an electron acceptor. Essential for the catalytic activity and assembly of complex I. In Myotis simus (Velvety myotis), this protein is NADH-ubiquinone oxidoreductase chain 2.